Consider the following 312-residue polypeptide: Dehydrogenase/reductase SDR family member 7C (312 aa).

A signal peptide spans 1–18 (MGVMAMLMLPLLLLGISG). The NAD(+) site is built by Ser-47, Leu-49, Tyr-192, Lys-196, and Ser-227. Tyr-192 functions as the Proton acceptor in the catalytic mechanism.

This sequence belongs to the short-chain dehydrogenases/reductases (SDR) family.

It localises to the sarcoplasmic reticulum membrane. The catalysed reaction is all-trans-retinol + NAD(+) = all-trans-retinal + NADH + H(+). Its function is as follows. NADH-dependent oxidoreductase which catalyzes the oxidation of all-trans-retinol to all-trans-retinal. Plays a role in the regulation of cardiac and skeletal muscle metabolic functions. Maintains Ca(2+) intracellular homeostasis by repressing Ca(2+) release from the sarcoplasmic reticulum (SR) in myotubes, possibly through local alternations in NAD/NADH or retinol/retinal. Also plays a role in Ca(2+) homeostasis by controlling Ca(2+) overload in the cytosol and the SR in myotubes. Involved in glucose uptake into skeletal muscles and muscle performance by activating PI3K and mTORC2-mediated AKT1 phosphorylation signaling pathways, possibly through the action of its downstream catalytic product all-trans-retinoic acid. The polypeptide is Dehydrogenase/reductase SDR family member 7C (Homo sapiens (Human)).